The primary structure comprises 159 residues: NADH-quinone oxidoreductase subunit I (159 aa).

2 4Fe-4S ferredoxin-type domains span residues 51 to 80 (RRYE…IEAD) and 90 to 119 (TRYD…EGPN). C60, C63, C66, C70, C99, C102, C105, and C109 together coordinate [4Fe-4S] cluster.

Belongs to the complex I 23 kDa subunit family. As to quaternary structure, NDH-1 is composed of 14 different subunits. Subunits NuoA, H, J, K, L, M, N constitute the membrane sector of the complex. The cofactor is [4Fe-4S] cluster.

Its subcellular location is the cell inner membrane. It carries out the reaction a quinone + NADH + 5 H(+)(in) = a quinol + NAD(+) + 4 H(+)(out). Its function is as follows. NDH-1 shuttles electrons from NADH, via FMN and iron-sulfur (Fe-S) centers, to quinones in the respiratory chain. The immediate electron acceptor for the enzyme in this species is believed to be ubiquinone. Couples the redox reaction to proton translocation (for every two electrons transferred, four hydrogen ions are translocated across the cytoplasmic membrane), and thus conserves the redox energy in a proton gradient. This Rickettsia conorii (strain ATCC VR-613 / Malish 7) protein is NADH-quinone oxidoreductase subunit I.